The chain runs to 1052 residues: F-box/WD repeat-containing protein 10 (1052 aa).

A WD 1 repeat occupies 169–206 (GLNQDITDVCFSPEKDHSSKSATSQVYWTAKTQHTSLP). The F-box domain maps to 276–323 (DFIRYLPIHLSKYILRMLDRHTLNKCASVSQHWAAMAQQVKMDLSAHG). WD repeat units lie at residues 409–447 (SDTWDQNRVIHYSGGDLIAVSSNRKIHLLDIIQVKAIPV), 451–490 (GHAGSVRALFLCEEENFLLSGSYDLSIRYWDLKSGVCTRI), 493–532 (GHQGTITCMDLCKNRLVSGGRDCQVKVWDVDTGKCLKTFR), 534–569 (KDPILATRINDTYIVSSCERGLVKVWHIAMAQLVKT), 572–609 (GHEGAVKCLFFDQWHLLSGSTDGLVMAWSMVGKYERCL), and 611–652 (AFKH…KVLK). Residues 690–719 (YAVEKTKQKKNKEKEEEKEENSLMEILSKC) are a coiled coil. Positions 766 to 805 (LQSQGKSKSPRRDADDVEKAQKQGQLETPGKLPSHPKKKS) are disordered. A compositionally biased stretch (basic and acidic residues) spans 775–786 (PRRDADDVEKAQ). Residues 986-1010 (VLLTVKEEKEHQEAKMKEYQAREST) are a coiled coil.

Its function is as follows. Probable substrate-recognition component of a SCF (SKP1-CUL1-F-box protein)-type E3 ubiquitin ligase complex which mediates the ubiquitination and subsequent proteasomal degradation of target proteins. Overexpression is leading to degradation of CBX5 and CBX1. This chain is F-box/WD repeat-containing protein 10 (FBXW10), found in Homo sapiens (Human).